An 803-amino-acid polypeptide reads, in one-letter code: Phosphoribosylformylglycinamidine synthase subunit PurL (803 aa).

The active site involves H65. Residues Y68 and K107 each coordinate ATP. E109 serves as a coordination point for Mg(2+). Substrate is bound by residues 110-113 (SHNH) and R132. H111 acts as the Proton acceptor in catalysis. D133 serves as a coordination point for Mg(2+). Substrate is bound at residue Q256. D284 contributes to the Mg(2+) binding site. Position 328-330 (328-330 (ESQ)) interacts with substrate. ATP is bound by residues N537 and G574. Mg(2+) is bound at residue N575. Residue S577 coordinates substrate.

This sequence belongs to the FGAMS family. In terms of assembly, monomer. Part of the FGAM synthase complex composed of 1 PurL, 1 PurQ and 2 PurS subunits.

The protein localises to the cytoplasm. It catalyses the reaction N(2)-formyl-N(1)-(5-phospho-beta-D-ribosyl)glycinamide + L-glutamine + ATP + H2O = 2-formamido-N(1)-(5-O-phospho-beta-D-ribosyl)acetamidine + L-glutamate + ADP + phosphate + H(+). It functions in the pathway purine metabolism; IMP biosynthesis via de novo pathway; 5-amino-1-(5-phospho-D-ribosyl)imidazole from N(2)-formyl-N(1)-(5-phospho-D-ribosyl)glycinamide: step 1/2. Part of the phosphoribosylformylglycinamidine synthase complex involved in the purines biosynthetic pathway. Catalyzes the ATP-dependent conversion of formylglycinamide ribonucleotide (FGAR) and glutamine to yield formylglycinamidine ribonucleotide (FGAM) and glutamate. The FGAM synthase complex is composed of three subunits. PurQ produces an ammonia molecule by converting glutamine to glutamate. PurL transfers the ammonia molecule to FGAR to form FGAM in an ATP-dependent manner. PurS interacts with PurQ and PurL and is thought to assist in the transfer of the ammonia molecule from PurQ to PurL. The protein is Phosphoribosylformylglycinamidine synthase subunit PurL of Prochlorococcus marinus (strain NATL2A).